The sequence spans 200 residues: Snake venom metalloproteinase rhomb-I (200 aa).

The region spanning 4–200 is the Peptidase M12B domain; sequence KYIELVVVAD…RKPQCILNKP (197 aa). Residues E7 and D91 each contribute to the Ca(2+) site. Intrachain disulfides connect C115-C195, C155-C179, and C157-C162. Zn(2+) is bound at residue H140. Residue E141 is part of the active site. Zn(2+) is bound by residues H144 and H150. Residues C195 and N198 each contribute to the Ca(2+) site.

In terms of assembly, monomer. The cofactor is Zn(2+). In terms of tissue distribution, expressed by the venom gland.

The protein localises to the secreted. Snake venom zinc metalloproteinase that induces hemorrhage. The protein is Snake venom metalloproteinase rhomb-I of Lachesis muta rhombeata (Bushmaster).